Reading from the N-terminus, the 655-residue chain is p-hydroxybenzoic acid efflux pump subunit AaeB (655 aa).

Residues 1-12 are Periplasmic-facing; sequence MGIFSIANQHIR. The helical transmembrane segment at 13–33 threads the bilayer; that stretch reads FAVKLACAIVLALFIGFHFQL. The Cytoplasmic portion of the chain corresponds to 34 to 37; sequence ETPR. A helical transmembrane segment spans residues 38-58; sequence WAVLTAAIVAAGPAFAAGGEP. Residues 59–68 are Periplasmic-facing; the sequence is YSGAIRYRGM. Residues 69–89 form a helical membrane-spanning segment; that stretch reads LRIIGTFIGCIAALIIIISMI. Topologically, residues 90–92 are cytoplasmic; the sequence is RAP. Residues 93 to 113 form a helical membrane-spanning segment; it reads LLMILVCCVWAGFCTWISSLV. The Periplasmic portion of the chain corresponds to 114–120; it reads RIENSYA. The chain crosses the membrane as a helical span at residues 121–141; the sequence is WGLSGYTALIIVITIQTEPLL. Over 142 to 151 the chain is Cytoplasmic; sequence TPQFALERCS. The chain crosses the membrane as a helical span at residues 152-172; sequence EIVIGIGCAILADLLFSPRSI. The Periplasmic segment spans residues 173–369; that stretch reads KQEVDRELDC…RTTLSCILGT (197 aa). Residues 370 to 390 form a helical membrane-spanning segment; the sequence is LFWLWTGWTSGNGAMVMIAVV. Over 391-406 the chain is Cytoplasmic; that stretch reads TSLAMRLPNPRMVCID. The helical transmembrane segment at 407 to 427 threads the bilayer; it reads FIYGTLAALPLGLLYFLVIIP. The Periplasmic portion of the chain corresponds to 428 to 430; it reads NTQ. The chain crosses the membrane as a helical span at residues 431 to 451; that stretch reads QSMLLLCLSLAVLGFFIGIEV. Topologically, residues 452 to 459 are cytoplasmic; the sequence is QKRRLGSM. A helical transmembrane segment spans residues 460–480; the sequence is GALASTINIIVLDNPMTFHFI. Gln481 is a topological domain (periplasmic). The helical transmembrane segment at 482-502 threads the bilayer; it reads FLDSALGQIVGCMLAFIVILL. Over 503 to 655 the chain is Cytoplasmic; sequence VRDKSKDRTG…HKYQNALTDS (153 aa).

It belongs to the aromatic acid exporter ArAE (TC 2.A.85) family.

The protein localises to the cell inner membrane. Its function is as follows. Forms an efflux pump with AaeA. Could function as a metabolic relief valve, allowing to eliminate certain compounds when they accumulate to high levels in the cell. The polypeptide is p-hydroxybenzoic acid efflux pump subunit AaeB (Salmonella typhi).